A 188-amino-acid polypeptide reads, in one-letter code: Elongation factor P (188 aa).

This sequence belongs to the elongation factor P family.

The protein localises to the cytoplasm. It participates in protein biosynthesis; polypeptide chain elongation. Its function is as follows. Involved in peptide bond synthesis. Stimulates efficient translation and peptide-bond synthesis on native or reconstituted 70S ribosomes in vitro. Probably functions indirectly by altering the affinity of the ribosome for aminoacyl-tRNA, thus increasing their reactivity as acceptors for peptidyl transferase. The sequence is that of Elongation factor P from Wolbachia sp. subsp. Drosophila simulans (strain wRi).